Consider the following 427-residue polypeptide: Glutamate-1-semialdehyde 2,1-aminomutase (427 aa).

Residue lysine 267 is modified to N6-(pyridoxal phosphate)lysine.

This sequence belongs to the class-III pyridoxal-phosphate-dependent aminotransferase family. HemL subfamily. In terms of assembly, homodimer. Requires pyridoxal 5'-phosphate as cofactor.

It is found in the cytoplasm. It catalyses the reaction (S)-4-amino-5-oxopentanoate = 5-aminolevulinate. Its pathway is porphyrin-containing compound metabolism; protoporphyrin-IX biosynthesis; 5-aminolevulinate from L-glutamyl-tRNA(Glu): step 2/2. The sequence is that of Glutamate-1-semialdehyde 2,1-aminomutase from Geobacter sulfurreducens (strain ATCC 51573 / DSM 12127 / PCA).